Reading from the N-terminus, the 81-residue chain is Small cysteine-rich protein 6 (81 aa).

An N-terminal signal peptide occupies residues 1 to 23 (MDTKVACLLLIILGALTVQGAVS). A propeptide spanning residues 24-25 (GN) is cleaved from the precursor.

It belongs to the Cnidaria small cysteine-rich protein (SCRiP) family. beta subfamily. Contains 4 disulfide bonds.

The protein localises to the secreted. It is found in the nematocyst. Induces neurotoxic symptoms on zebrafish. Has also been claimed to be implied in calcification, but tests on homolog proteins suggest that proteins of this family have a neurotoxic function and not a calcification function. The polypeptide is Small cysteine-rich protein 6 (Orbicella faveolata (Mountainous star coral)).